Here is a 320-residue protein sequence, read N- to C-terminus: ADP/ATP translocase 4 (320 aa).

Residues 1-20 (MSNESSKKQSSKKALFDPVS) are Mitochondrial intermembrane-facing. One copy of the Solcar 1 repeat lies at 19-111 (VSFSKDLLAG…FAFKDKYKEL (93 aa)). Residues 21-50 (FSKDLLAGGVAAAVSKTAVAPIERVKLLLQ) form a helical membrane-spanning segment. Over 51–87 (VQASSKQISPEARYKGMLDCLVRIPREQGFLSYWRGN) the chain is Mitochondrial matrix. Residues 88–112 (LANVIRYFPTQALNFAFKDKYKELF) form a helical membrane-spanning segment. The ADP site is built by Arg93 and Lys105. Over 113 to 122 (MSGVNKEKQF) the chain is Mitochondrial intermembrane. Residues 123–143 (WRWFLANLASGGAAGATSLCV) form a helical membrane-spanning segment. Solcar repeat units follow at residues 124-214 (RWFL…VKGL) and 221-308 (TPFL…IKEF). Topologically, residues 144-191 (VYPLDFARTRLGVDIGKGPEQRQFTGLGDCIMKIAKSDGLIGLYQGFG) are mitochondrial matrix. The chain crosses the membrane as a helical span at residues 192-212 (VSVQGIIVYRASYFGAYDTVK). Residues 213-223 (GLLPKPKETPF) lie on the Mitochondrial intermembrane side of the membrane. A helical membrane pass occupies residues 224 to 244 (LVSFIIAQIVTTCSGILSYPF). Residues 245-284 (DTVRRRMMMQSGESDRQYKGTIDCFLKIYRHEGVPAFFRG) are Mitochondrial matrix-facing. Residue Arg248 coordinates ADP. Positions 248–253 (RRRMMM) are important for transport activity. A Nucleotide carrier signature motif motif is present at residues 248–253 (RRRMMM). The helical transmembrane segment at 285–302 (AFSNILRGTGGALVLVLY) threads the bilayer. Topologically, residues 303–320 (DKIKEFLNIDVGGSSSGD) are mitochondrial intermembrane.

The protein belongs to the mitochondrial carrier (TC 2.A.29) family. In terms of assembly, monomer. In terms of tissue distribution, specifically expressed in undifferentiated embryonic stem cells and germ cells. Expression is down-regulated after embryonic stem cells differentiation. In adults, only expressed in developing gametes in testis. In testis, expressed at higher level in spermatocytes. Expression is probably associated with entry of the male germ cells into meiosis. Expressed at very low level in Sertoli cells.

It localises to the mitochondrion inner membrane. It is found in the membrane. The protein localises to the cell projection. Its subcellular location is the cilium. The protein resides in the flagellum membrane. The catalysed reaction is ADP(in) + ATP(out) = ADP(out) + ATP(in). The enzyme catalyses dATP(out) + ADP(in) = dATP(in) + ADP(out). It catalyses the reaction dADP(in) + ADP(out) = dADP(out) + ADP(in). It carries out the reaction H(+)(in) = H(+)(out). With respect to regulation, the matrix-open state (m-state) is inhibited by the membrane-permeable bongkrekic acid (BKA). The cytoplasmic-open state (c-state) is inhibited by the membrane-impermeable toxic inhibitor carboxyatractyloside (CATR). Proton transporter activity is inhibited by ADP:ATP antiporter activity. ADP:ATP antiporter that mediates import of ADP into the mitochondrial matrix for ATP synthesis, and export of ATP out to fuel the cell. Cycles between the cytoplasmic-open state (c-state) and the matrix-open state (m-state): operates by the alternating access mechanism with a single substrate-binding site intermittently exposed to either the cytosolic (c-state) or matrix (m-state) side of the inner mitochondrial membrane. Specifically required during spermatogenesis, probably to mediate ADP:ATP exchange in spermatocytes. Large ATP supplies from mitochondria may be critical for normal progression of spermatogenesis during early stages of meiotic prophase I, including DNA double-strand break repair and chromosomal synapsis. In addition to its ADP:ATP antiporter activity, also involved in mitochondrial uncoupling and mitochondrial permeability transition pore (mPTP) activity. Plays a role in mitochondrial uncoupling by acting as a proton transporter: proton transport uncouples the proton flows via the electron transport chain and ATP synthase to reduce the efficiency of ATP production and cause mitochondrial thermogenesis. Proton transporter activity is inhibited by ADP:ATP antiporter activity, suggesting that SLC25A31/ANT4 acts as a master regulator of mitochondrial energy output by maintaining a delicate balance between ATP production (ADP:ATP antiporter activity) and thermogenesis (proton transporter activity). Proton transporter activity requires free fatty acids as cofactor, but does not transport it. Among nucleotides, may also exchange ADP for dATP and dADP. Also plays a key role in mPTP opening, a non-specific pore that enables free passage of the mitochondrial membranes to solutes of up to 1.5 kDa, and which contributes to cell death. It is however unclear if SLC25A31/ANT4 constitutes a pore-forming component of mPTP or regulates it. This Mus musculus (Mouse) protein is ADP/ATP translocase 4.